Consider the following 227-residue polypeptide: Small ribosomal subunit protein uS3 (227 aa).

Residues 38 to 106 (LRKYLREKLA…EVHLNIVEIR (69 aa)) enclose the KH type-2 domain.

Belongs to the universal ribosomal protein uS3 family. Part of the 30S ribosomal subunit. Forms a tight complex with proteins S10 and S14.

Binds the lower part of the 30S subunit head. Binds mRNA in the 70S ribosome, positioning it for translation. This is Small ribosomal subunit protein uS3 from Paramagnetospirillum magneticum (strain ATCC 700264 / AMB-1) (Magnetospirillum magneticum).